Here is a 516-residue protein sequence, read N- to C-terminus: Delta(24)-sterol reductase (516 aa).

The first 22 residues, 1 to 22 (MEPAVSLAVCALLFLLWVRVKG), serve as a signal peptide directing secretion. Residues 23–31 (LEFVLIHQR) lie on the Lumenal side of the membrane. Residues 32-52 (WVFVCLFLLPLSLIFDIYYYV) traverse the membrane as a helical segment. Residues 53–516 (RAWVVFKLSS…YDKICKAARH (464 aa)) lie on the Cytoplasmic side of the membrane. The FAD-binding PCMH-type domain occupies 58–234 (FKLSSAPRLH…VAAEIRIIPA (177 aa)). 163–175 (TVGGLIMGTGIES) contributes to the FAD binding site.

The protein belongs to the FAD-binding oxidoreductase/transferase type 4 family. In terms of assembly, interacts with DHCR7; this interaction regulates DHCR7 activity. FAD serves as cofactor.

It is found in the endoplasmic reticulum membrane. It localises to the golgi apparatus membrane. The catalysed reaction is cholesterol + NADP(+) = desmosterol + NADPH + H(+). It carries out the reaction lanosterol + NADPH + H(+) = 24,25-dihydrolanosterol + NADP(+). The enzyme catalyses 5alpha-cholest-8-en-3beta-ol + NADP(+) = zymosterol + NADPH + H(+). It participates in steroid biosynthesis; cholesterol biosynthesis. Catalyzes the reduction of the delta-24 double bond of sterol intermediates during cholesterol biosynthesis. In addition to its cholesterol-synthesizing activity, can protect cells from oxidative stress by reducing caspase 3 activity during apoptosis induced by oxidative stress. Also protects against amyloid-beta peptide-induced apoptosis. The polypeptide is Delta(24)-sterol reductase (Dhcr24) (Rattus norvegicus (Rat)).